A 129-amino-acid polypeptide reads, in one-letter code: Small ribosomal subunit protein uS11 (129 aa).

This sequence belongs to the universal ribosomal protein uS11 family. As to quaternary structure, part of the 30S ribosomal subunit. Interacts with proteins S7 and S18. Binds to IF-3.

Functionally, located on the platform of the 30S subunit, it bridges several disparate RNA helices of the 16S rRNA. Forms part of the Shine-Dalgarno cleft in the 70S ribosome. The chain is Small ribosomal subunit protein uS11 from Bacillus cereus (strain G9842).